The primary structure comprises 71 residues: Conotoxin LvVIB (71 aa).

The first 17 residues, 1–17, serve as a signal peptide directing secretion; it reads VLIIAVLFLTASELVTA. The propeptide occupies 18–41; that stretch reads DYTRDKWQYRAASLRDAMRNFRDT. 3 disulfides stabilise this stretch: Cys-43-Cys-57, Cys-50-Cys-62, and Cys-56-Cys-69.

It belongs to the conotoxin O1 superfamily. In terms of tissue distribution, expressed by the venom duct.

The protein resides in the secreted. The sequence is that of Conotoxin LvVIB from Conus lividus (Livid cone).